Consider the following 830-residue polypeptide: DNA gyrase subunit A (830 aa).

Positions 34–514 (LPDVRDGLKP…NHSDINMEDL (481 aa)) constitute a Topo IIA-type catalytic domain. The active-site O-(5'-phospho-DNA)-tyrosine intermediate is the Tyr-122. A GyrA-box motif is present at residues 541 to 547 (QRRGGKG).

The protein belongs to the type II topoisomerase GyrA/ParC subunit family. Heterotetramer, composed of two GyrA and two GyrB chains. In the heterotetramer, GyrA contains the active site tyrosine that forms a transient covalent intermediate with DNA, while GyrB binds cofactors and catalyzes ATP hydrolysis.

The protein localises to the cytoplasm. It carries out the reaction ATP-dependent breakage, passage and rejoining of double-stranded DNA.. In terms of biological role, a type II topoisomerase that negatively supercoils closed circular double-stranded (ds) DNA in an ATP-dependent manner to modulate DNA topology and maintain chromosomes in an underwound state. Negative supercoiling favors strand separation, and DNA replication, transcription, recombination and repair, all of which involve strand separation. Also able to catalyze the interconversion of other topological isomers of dsDNA rings, including catenanes and knotted rings. Type II topoisomerases break and join 2 DNA strands simultaneously in an ATP-dependent manner. This is DNA gyrase subunit A from Buchnera aphidicola subsp. Acyrthosiphon pisum (strain APS) (Acyrthosiphon pisum symbiotic bacterium).